Consider the following 298-residue polypeptide: HTH-type transcriptional regulator TsaR (298 aa).

Residues 1 to 58 form the HTH lysR-type domain; sequence MKLQTLQALICIEEVGSLRAAAQLLHLSQPALSAAIQQLEDELKAPLLVRTKRGVSLT. A DNA-binding region (H-T-H motif) is located at residues 18–37; the sequence is LRAAAQLLHLSQPALSAAIQ. Toluene-4-sulfonate-binding residues include serine 98 and alanine 100.

Belongs to the LysR transcriptional regulatory family. As to quaternary structure, homotetramer. Dimer of dimers related by a twofold axis.

Sensitive to oxygen. Its function is as follows. Regulates expression of the tsaMBCD1 operon and of tsaT in response to p-toluenesulfonate (TSA). Acts by binding directly to the promoter region. Binding to the tsa promoter depends on TSA concentration. The chain is HTH-type transcriptional regulator TsaR (tsaR) from Comamonas testosteroni (Pseudomonas testosteroni).